The following is a 520-amino-acid chain: Transactivator/viroplasmin protein (520 aa).

Residues 486-520 (VQDASADSGPKDGPPPTRSIVEKEDVPTTSSKQVD) are disordered.

It belongs to the caulimoviridae viroplasmin family.

It localises to the host cytoplasm. Functionally, enhances the ribosomal termination-reinitiation event leading to the translation of major open reading frames on the polycistronic viral RNAs. This is Transactivator/viroplasmin protein from Cauliflower mosaic virus (strain BBC) (CaMV).